Reading from the N-terminus, the 166-residue chain is Large ribosomal subunit protein uL10 (166 aa).

Belongs to the universal ribosomal protein uL10 family. Part of the ribosomal stalk of the 50S ribosomal subunit. The N-terminus interacts with L11 and the large rRNA to form the base of the stalk. The C-terminus forms an elongated spine to which L12 dimers bind in a sequential fashion forming a multimeric L10(L12)X complex.

Forms part of the ribosomal stalk, playing a central role in the interaction of the ribosome with GTP-bound translation factors. In Streptococcus gordonii (strain Challis / ATCC 35105 / BCRC 15272 / CH1 / DL1 / V288), this protein is Large ribosomal subunit protein uL10.